A 681-amino-acid chain; its full sequence is tRNA wybutosine-synthesizing protein 4 (681 aa).

The span at 1 to 11 (MSNKNQRKTKS) shows a compositional bias: basic residues. A disordered region spans residues 1-21 (MSNKNQRKTKSKDREVRKTND). S-adenosyl-L-methionine-binding positions include Arg66, Gly92, Asp119, 165-166 (NL), and Glu193.

Belongs to the methyltransferase superfamily. LCMT family.

It catalyses the reaction 7-[(3S)-3-amino-3-carboxypropyl]wyosine(37) in tRNA(Phe) + S-adenosyl-L-methionine = 7-[(3S)-(3-amino-3-methoxycarbonyl)propyl]wyosine(37) in tRNA(Phe) + S-adenosyl-L-homocysteine. It carries out the reaction 7-[(3S)-(3-amino-3-methoxycarbonyl)propyl]wyosine(37) in tRNA(Phe) + S-adenosyl-L-methionine + CO2 = wybutosine(37) in tRNA(Phe) + S-adenosyl-L-homocysteine + 2 H(+). It functions in the pathway tRNA modification; wybutosine-tRNA(Phe) biosynthesis. Its function is as follows. Probable S-adenosyl-L-methionine-dependent methyltransferase that acts as a component of the wybutosine biosynthesis pathway. Wybutosine is a hyper modified guanosine with a tricyclic base found at the 3'-position adjacent to the anticodon of eukaryotic phenylalanine tRNA. May methylate the carboxyl group of leucine residues to form alpha-leucine ester residues. The protein is tRNA wybutosine-synthesizing protein 4 (ppm2) of Schizosaccharomyces pombe (strain 972 / ATCC 24843) (Fission yeast).